Consider the following 225-residue polypeptide: Superantigen-like protein 11 (225 aa).

The first 30 residues, 1-30, serve as a signal peptide directing secretion; the sequence is MKLKNIAKASLALGILTTGMITTTAQPVKA. Positions 94 to 196 are sialyl Lewis X-binding; the sequence is VDIFVVRENS…RITMKDGGFY (103 aa).

This sequence belongs to the staphylococcal/streptococcal toxin family. As to quaternary structure, homodimer (via its C-terminal domain). Interacts with host FCAR and SELPLG (via sialyl Lewis X).

It localises to the secreted. In terms of biological role, secreted protein that plays a role in the inhibition of host immune system. Targets myeloid cells such as monocytes or granulocytes through binding with sialyllactosamine-containing glycoproteins. Prevents initial rolling of neutrophils toward the site of infection by interacting with host SELPLG. Disrupts neutrophil motility by induction of cell adhesion via interacting with glycans but independently of SELPLG. The polypeptide is Superantigen-like protein 11 (Staphylococcus aureus (strain Newman)).